Reading from the N-terminus, the 262-residue chain is 2-oxo-tetronate isomerase (262 aa).

Glu-143 acts as the Proton donor/acceptor in catalysis. Mg(2+)-binding residues include Glu-143, Asp-178, Gln-204, and Glu-240. The active-site Proton donor/acceptor is Glu-240.

Belongs to the hyi family. OtnI subfamily.

It catalyses the reaction 2-dehydro-L-erythronate = 3-dehydro-L-erythronate. The enzyme catalyses 2-dehydro-D-erythronate = 3-dehydro-D-erythronate. In terms of biological role, catalyzes the isomerization of 2-oxo-tetronate to 3-oxo-tetronate. The sequence is that of 2-oxo-tetronate isomerase from Pectobacterium atrosepticum (strain SCRI 1043 / ATCC BAA-672) (Erwinia carotovora subsp. atroseptica).